The chain runs to 245 residues: tRNA (guanine-N(7)-)-methyltransferase (245 aa).

The S-adenosyl-L-methionine site is built by Glu75, Glu100, Asp127, and Asp150. Residue Asp150 is part of the active site. Residues Lys154, Asp186, and 223-226 (TKFE) contribute to the substrate site.

Belongs to the class I-like SAM-binding methyltransferase superfamily. TrmB family.

It catalyses the reaction guanosine(46) in tRNA + S-adenosyl-L-methionine = N(7)-methylguanosine(46) in tRNA + S-adenosyl-L-homocysteine. Its pathway is tRNA modification; N(7)-methylguanine-tRNA biosynthesis. Its function is as follows. Catalyzes the formation of N(7)-methylguanine at position 46 (m7G46) in tRNA. The sequence is that of tRNA (guanine-N(7)-)-methyltransferase from Photobacterium profundum (strain SS9).